The primary structure comprises 74 residues: uncharacterized protein (74 aa).

The helical transmembrane segment at 20 to 40 threads the bilayer; that stretch reads IYSYTLLTLLVITLICYLIHI.

Belongs to the asfivirus KP93L family.

Its subcellular location is the host membrane. This is an uncharacterized protein from African swine fever virus (isolate Tick/South Africa/Pretoriuskop Pr4/1996) (ASFV).